Reading from the N-terminus, the 1816-residue chain is Kinesin-like protein KIF1B (1816 aa).

Ser-2 carries the post-translational modification N-acetylserine. The Kinesin motor domain occupies 5–354 (SVKVAVRVRP…LRYADRAKQI (350 aa)). 97–104 (GQTGAGKS) contributes to the ATP binding site. Residues 270 to 350 (NINKSLTTLG…TLSTLRYADR (81 aa)) are interaction with KIFBP. A disordered region spans residues 431-450 (FSTASMGSLTSSPSSCSLNS). Low complexity predominate over residues 432 to 450 (STASMGSLTSSPSSCSLNS). The stretch at 470–512 (GEEAIERLKESEKIIAELNETWEEKLRKTEAIRMEREALLAEM) forms a coiled coil. The FHA domain occupies 556-612 (TRVGQADAERRQDIVLSGAHIKEEHCIFRSERNNTGEVIVTLEPCERSETYVNGKRV). 2 positions are modified to phosphothreonine: Thr-647 and Thr-652. Positions 672–731 (IDMKQEMEKRLQEMEILYKREKEEADLLLEQQRLDYESKLQALQKQVETRSLAAETTEEE) form a coiled coil. Phosphoserine occurs at positions 1054, 1057, 1416, 1454, and 1487. The interval 1550 to 1570 (STTTFESAITPSESSGYDSAD) is disordered. Phosphoserine occurs at positions 1573, 1603, 1610, and 1613. Low complexity predominate over residues 1620 to 1637 (SVSSFSSSTLTPSSTCPS). Positions 1620-1659 (SVSSFSSSTLTPSSTCPSLVDSRSSSMDQKTPEANSRASS) are disordered. The span at 1640–1659 (DSRSSSMDQKTPEANSRASS) shows a compositional bias: polar residues. The PH domain occupies 1701–1799 (VVSKKGYLHF…WLYAFNPLLA (99 aa)).

It belongs to the TRAFAC class myosin-kinesin ATPase superfamily. Kinesin family. Unc-104 subfamily. Monomer. Interacts with KIFBP; positively regulates KIF1B microtubule motor activity. Interacts (via C-terminus end of the kinesin-motor domain) with CHP1; the interaction occurs in a calcium-dependent manner. Interacts with MADD (via death domain); links this isoform of KIF1B to Rab3-carrying vesicles in anterograde synaptic vesicle transport. Expressed in the brain with lower expression in testis and liver (at protein level). Strongly expressed in the brain and ovary, with lower expression in lung, kidney, uterus, testis and liver. As to expression, isoform 2 is expressed in non-neuronal tissues.

It is found in the cytoplasm. It localises to the cytoskeleton. The protein localises to the cytoplasmic vesicle. Its subcellular location is the secretory vesicle. The protein resides in the synaptic vesicle membrane. It is found in the lysosome. The enzyme catalyses ATP + H2O + a kinesin associated with a microtubule at position (n) = ADP + phosphate a kinesin associated with a microtubule at position (n+1, toward the plus end).. Its function is as follows. Has a plus-end-directed microtubule motor activity and functions as a motor for transport of vesicles and organelles along microtubules. In terms of biological role, has a plus-end-directed microtubule motor activity and functions as a motor for anterograde synaptic vesicle transport along axonal microtubules from the cell body to the presynapse in neuronal cells. Has a plus-end-directed microtubule motor activity and functions as a motor for the translocation of lysosomes from perinuclear regions to the cell periphery. The polypeptide is Kinesin-like protein KIF1B (Rattus norvegicus (Rat)).